The primary structure comprises 149 residues: Deoxyuridine 5'-triphosphate nucleotidohydrolase (149 aa).

Residues arginine 68–glycine 70, asparagine 81, leucine 85–aspartate 87, and methionine 95 contribute to the substrate site.

The protein belongs to the dUTPase family. Mg(2+) serves as cofactor.

The catalysed reaction is dUTP + H2O = dUMP + diphosphate + H(+). It participates in pyrimidine metabolism; dUMP biosynthesis; dUMP from dCTP (dUTP route): step 2/2. This enzyme is involved in nucleotide metabolism: it produces dUMP, the immediate precursor of thymidine nucleotides and it decreases the intracellular concentration of dUTP so that uracil cannot be incorporated into DNA. This Polynucleobacter asymbioticus (strain DSM 18221 / CIP 109841 / QLW-P1DMWA-1) (Polynucleobacter necessarius subsp. asymbioticus) protein is Deoxyuridine 5'-triphosphate nucleotidohydrolase.